A 155-amino-acid polypeptide reads, in one-letter code: Protein-export protein SecB (155 aa).

It belongs to the SecB family. Homotetramer, a dimer of dimers. One homotetramer interacts with 1 SecA dimer.

Its subcellular location is the cytoplasm. In terms of biological role, one of the proteins required for the normal export of preproteins out of the cell cytoplasm. It is a molecular chaperone that binds to a subset of precursor proteins, maintaining them in a translocation-competent state. It also specifically binds to its receptor SecA. The chain is Protein-export protein SecB from Enterobacter sp. (strain 638).